We begin with the raw amino-acid sequence, 657 residues long: Conserved oligomeric Golgi complex subunit 6 (657 aa).

The protein belongs to the COG6 family. Component of the conserved oligomeric Golgi complex which is composed of eight different subunits and is required for normal Golgi morphology and localization.

Its subcellular location is the golgi apparatus membrane. Its function is as follows. Required for normal Golgi function. This chain is Conserved oligomeric Golgi complex subunit 6 (COG6), found in Bos taurus (Bovine).